Consider the following 476-residue polypeptide: Proline--tRNA ligase 2 (476 aa).

This sequence belongs to the class-II aminoacyl-tRNA synthetase family. ProS type 3 subfamily. As to quaternary structure, homodimer.

The protein resides in the cytoplasm. The catalysed reaction is tRNA(Pro) + L-proline + ATP = L-prolyl-tRNA(Pro) + AMP + diphosphate. Functionally, catalyzes the attachment of proline to tRNA(Pro) in a two-step reaction: proline is first activated by ATP to form Pro-AMP and then transferred to the acceptor end of tRNA(Pro). In Bacillus cereus (strain ATCC 14579 / DSM 31 / CCUG 7414 / JCM 2152 / NBRC 15305 / NCIMB 9373 / NCTC 2599 / NRRL B-3711), this protein is Proline--tRNA ligase 2.